The primary structure comprises 235 residues: Phosphoribosylaminoimidazole-succinocarboxamide synthase (235 aa).

Belongs to the SAICAR synthetase family.

It carries out the reaction 5-amino-1-(5-phospho-D-ribosyl)imidazole-4-carboxylate + L-aspartate + ATP = (2S)-2-[5-amino-1-(5-phospho-beta-D-ribosyl)imidazole-4-carboxamido]succinate + ADP + phosphate + 2 H(+). Its pathway is purine metabolism; IMP biosynthesis via de novo pathway; 5-amino-1-(5-phospho-D-ribosyl)imidazole-4-carboxamide from 5-amino-1-(5-phospho-D-ribosyl)imidazole-4-carboxylate: step 1/2. This Sulfolobus acidocaldarius (strain ATCC 33909 / DSM 639 / JCM 8929 / NBRC 15157 / NCIMB 11770) protein is Phosphoribosylaminoimidazole-succinocarboxamide synthase.